A 318-amino-acid polypeptide reads, in one-letter code: Malonyl-S-ACP:biotin-protein carboxyltransferase MADC (318 aa).

Positions 2–257 (AKWTELQDKS…VLQKPMEEIE (256 aa)) constitute a CoA carboxyltransferase N-terminal domain.

It is found in the cytoplasm. The enzyme catalyses N(6)-biotinyl-L-lysyl-[protein] + malonyl-[ACP] = N(6)-carboxybiotinyl-L-lysyl-[protein] + acetyl-[ACP]. Gamma subunit of the biotin-dependent malonate decarboxylase multienzyme complex (EC 7.2.4.4). The two subunits MADC and MADD are required for the transfer of the malonate carboxy group from the acyl-carrier protein (ACP) to the prosthetic group of the biotin carrier MADF. Required for the regeneration of ACP. The polypeptide is Malonyl-S-ACP:biotin-protein carboxyltransferase MADC (madC) (Malonomonas rubra).